We begin with the raw amino-acid sequence, 35 residues long: Kappa-theraphotoxin-Gr1b (35 aa).

3 disulfides stabilise this stretch: cysteine 2-cysteine 16, cysteine 9-cysteine 21, and cysteine 15-cysteine 28. The interval 4 to 6 (YLF) is involved in active face.

The protein belongs to the neurotoxin 10 (Hwtx-1) family. 09 (HaTx) subfamily. Expressed by the venom gland.

The protein localises to the secreted. Inhibitor of voltage-gated potassium channels. Inhibits Kv2.1/KCNB1 channels, by shifting activation of the channel to more depolarized voltages. The toxin binding sites may be situated on the S3-S4 extracellular linker of the channel. One, two, three or four toxin molecules may bind the Kv2.1/KCNB1 channel. May need to partition into the membrane in order to bind to the channel. Antibacterial activity is not observed. The chain is Kappa-theraphotoxin-Gr1b from Grammostola rosea (Chilean rose tarantula).